A 200-amino-acid chain; its full sequence is UPF0637 protein LCABL_14170 (200 aa).

This sequence belongs to the UPF0637 family.

This is UPF0637 protein LCABL_14170 from Lacticaseibacillus casei (strain BL23) (Lactobacillus casei).